The sequence spans 427 residues: 3-phosphoshikimate 1-carboxyvinyltransferase (427 aa).

Residues Lys20, Ser21, and Arg25 each contribute to the 3-phosphoshikimate site. A phosphoenolpyruvate-binding site is contributed by Lys20. Residues Gly92 and Arg120 each contribute to the phosphoenolpyruvate site. 3-phosphoshikimate contacts are provided by Ser166, Gln168, Asp312, and Lys339. Residue Gln168 coordinates phosphoenolpyruvate. The active-site Proton acceptor is the Asp312. Phosphoenolpyruvate contacts are provided by Arg343 and Arg385.

Belongs to the EPSP synthase family. As to quaternary structure, monomer.

The protein localises to the cytoplasm. It carries out the reaction 3-phosphoshikimate + phosphoenolpyruvate = 5-O-(1-carboxyvinyl)-3-phosphoshikimate + phosphate. It participates in metabolic intermediate biosynthesis; chorismate biosynthesis; chorismate from D-erythrose 4-phosphate and phosphoenolpyruvate: step 6/7. Its function is as follows. Catalyzes the transfer of the enolpyruvyl moiety of phosphoenolpyruvate (PEP) to the 5-hydroxyl of shikimate-3-phosphate (S3P) to produce enolpyruvyl shikimate-3-phosphate and inorganic phosphate. The sequence is that of 3-phosphoshikimate 1-carboxyvinyltransferase from Streptococcus pneumoniae (strain Hungary19A-6).